Consider the following 289-residue polypeptide: Rhodopsin (289 aa).

Residues 1 to 7 (YLVSPAG) are Extracellular-facing. A helical transmembrane segment spans residues 8–32 (YAALGAYMFLLILVGFPVNFLTLYV). Residues 33-44 (TLEHKKLRTPLN) lie on the Cytoplasmic side of the membrane. A helical membrane pass occupies residues 45 to 67 (YILLNLAVADLFMVLGGFTTTMY). The Extracellular segment spans residues 68–81 (TSMHGYFVLGRLGC). A disulfide bond links cysteine 81 and cysteine 158. A helical membrane pass occupies residues 82–104 (NLEGFFVTLGGEIALWSLVVLAI). The short motif at 105–107 (ERW) is the 'Ionic lock' involved in activated form stabilization element. At 105 to 123 (ERWIGVFKSIRNFRFTEDH) the chain is on the cytoplasmic side. Residues 124 to 144 (AIMGLGFSWVMAATCAVPPLV) form a helical membrane-spanning segment. At 145–173 (GWLRYIPEGMQCSCGVDYYTRAEGFNNES) the chain is on the extracellular side. Residue asparagine 171 is glycosylated (N-linked (GlcNAc...) asparagine). The chain crosses the membrane as a helical span at residues 174–195 (FVIYMFIVHFLIPLIVIFFCYG). The Cytoplasmic segment spans residues 196–223 (RLLCAVKEAAAAQQESETTQRAEKEVSR). Residues 224–245 (MVVIMVIGYLVCWLPYASVAWW) form a helical membrane-spanning segment. At 246 to 257 (IFCNQGSEFGPI) the chain is on the extracellular side. The helical transmembrane segment at 258 to 279 (FMTLPAFFAKSPAIYNPLIYIC) threads the bilayer. Residue lysine 267 is modified to N6-(retinylidene)lysine. Residues 280–289 (MNKQFPHCMI) lie on the Cytoplasmic side of the membrane.

It belongs to the G-protein coupled receptor 1 family. Opsin subfamily. In terms of processing, phosphorylated on some or all of the serine and threonine residues present in the C-terminal region. Contains one covalently linked retinal chromophore.

It localises to the membrane. The protein resides in the cell projection. It is found in the cilium. The protein localises to the photoreceptor outer segment. Its function is as follows. Photoreceptor required for image-forming vision at low light intensity. While most salt water fish species use retinal as chromophore, most freshwater fish use 3-dehydroretinal, or a mixture of retinal and 3-dehydroretinal. Light-induced isomerization of 11-cis to all-trans retinal triggers a conformational change that activates signaling via G-proteins. Subsequent receptor phosphorylation mediates displacement of the bound G-protein alpha subunit by arrestin and terminates signaling. This is Rhodopsin (rho) from Leocottus kesslerii (Kessler's sculpin).